Reading from the N-terminus, the 258-residue chain is Acetylglutamate kinase (258 aa).

Residues 41 to 42 (GG), Arg63, and Asn156 each bind substrate.

This sequence belongs to the acetylglutamate kinase family. ArgB subfamily.

The protein localises to the cytoplasm. It carries out the reaction N-acetyl-L-glutamate + ATP = N-acetyl-L-glutamyl 5-phosphate + ADP. It functions in the pathway amino-acid biosynthesis; L-arginine biosynthesis; N(2)-acetyl-L-ornithine from L-glutamate: step 2/4. Catalyzes the ATP-dependent phosphorylation of N-acetyl-L-glutamate. The protein is Acetylglutamate kinase of Geobacillus thermodenitrificans (strain NG80-2).